The primary structure comprises 357 residues: Uroporphyrinogen decarboxylase (357 aa).

Residues 27–31, aspartate 77, tyrosine 154, threonine 209, and histidine 327 contribute to the substrate site; that span reads RQAGR.

Belongs to the uroporphyrinogen decarboxylase family. Homodimer.

Its subcellular location is the cytoplasm. The enzyme catalyses uroporphyrinogen III + 4 H(+) = coproporphyrinogen III + 4 CO2. It participates in porphyrin-containing compound metabolism; protoporphyrin-IX biosynthesis; coproporphyrinogen-III from 5-aminolevulinate: step 4/4. Functionally, catalyzes the decarboxylation of four acetate groups of uroporphyrinogen-III to yield coproporphyrinogen-III. This chain is Uroporphyrinogen decarboxylase, found in Proteus mirabilis (strain HI4320).